The following is a 438-amino-acid chain: MKPLHYTASALALGLALMGNAQAVTTIPFWHSMEGELGKEVDSLAQRFNAENPDYKIVPTYKGNYEQNLSAGIAAFRTGNAPAILQVYEVGTATMMASKAIKPVYDVFKEAGIQFDESQFVPTVSGYYSDSKTGHLLSQPFNSSTPVLYYNKDAFKKAGLDPEQPPKTWQDLADYAAKLKASGMKCGYASGWQGWIQLENFSAWNGLPFASKNNGFDGTDAVLEFNKPEQVKHIAMLEEMNKKGDFSYVGRKDESTEKFYNGDCAMTTASSGSLANIREYAKFNYGVGMMPYDADAKDAPQNAIIGGASLWVMQGKDKETYTGVAKFLDFLAKPENAAEWHQKTGYLPITKAAYDLTREQGFYEKNPGADTATRQMLNKPPLPFTKGLRLGNMPQIRVIVDEELESVWTGKKTPQQALDTAVERGNQLLRRFEKSTKS.

The first 23 residues, 1-23, serve as a signal peptide directing secretion; it reads MKPLHYTASALALGLALMGNAQA. Residues tyrosine 65, glutamate 89, serine 144, serine 270, glycine 307, tyrosine 346, and arginine 397 each coordinate sn-glycerol 3-phosphate.

It belongs to the bacterial solute-binding protein 1 family. The complex is composed of two ATP-binding proteins (UgpC), two transmembrane proteins (UgpA and UgpE) and a solute-binding protein (UgpB).

It localises to the periplasm. Functionally, part of the ABC transporter complex UgpBAEC involved in sn-glycerol-3-phosphate (G3P) import. Binds G3P. The protein is sn-glycerol-3-phosphate-binding periplasmic protein UgpB (ugpB) of Escherichia coli O157:H7.